We begin with the raw amino-acid sequence, 427 residues long: Nuclear distribution protein PAC1-2 (427 aa).

The region spanning glutamine 8 to tyrosine 40 is the LisH domain. Residues serine 58–alanine 82 adopt a coiled-coil conformation. WD repeat units follow at residues serine 106 to lysine 147, histidine 149 to tyrosine 187, glycine 194 to threonine 233, glycine 236 to glutamate 275, glycine 278 to threonine 336, glycine 339 to valine 378, and alanine 381 to methionine 420.

It belongs to the WD repeat LIS1/nudF family. As to quaternary structure, self-associates. Interacts with NDL1 and dynein.

The protein localises to the cytoplasm. It is found in the cytoskeleton. It localises to the spindle pole. Functionally, positively regulates the activity of the minus-end directed microtubule motor protein dynein. May enhance dynein-mediated microtubule sliding by targeting dynein to the microtubule plus end. Required for nuclear migration during vegetative growth as well as development. Required for retrograde early endosome (EE) transport from the hyphal tip. Required for localization of dynein to the mitotic spindle poles. Recruits additional proteins to the dynein complex at SPBs. This chain is Nuclear distribution protein PAC1-2, found in Postia placenta (strain ATCC 44394 / Madison 698-R) (Brown rot fungus).